The primary structure comprises 179 residues: ATP synthase subunit delta (179 aa).

The protein belongs to the ATPase delta chain family. F-type ATPases have 2 components, F(1) - the catalytic core - and F(0) - the membrane proton channel. F(1) has five subunits: alpha(3), beta(3), gamma(1), delta(1), epsilon(1). F(0) has three main subunits: a(1), b(2) and c(10-14). The alpha and beta chains form an alternating ring which encloses part of the gamma chain. F(1) is attached to F(0) by a central stalk formed by the gamma and epsilon chains, while a peripheral stalk is formed by the delta and b chains.

The protein resides in the cell inner membrane. F(1)F(0) ATP synthase produces ATP from ADP in the presence of a proton or sodium gradient. F-type ATPases consist of two structural domains, F(1) containing the extramembraneous catalytic core and F(0) containing the membrane proton channel, linked together by a central stalk and a peripheral stalk. During catalysis, ATP synthesis in the catalytic domain of F(1) is coupled via a rotary mechanism of the central stalk subunits to proton translocation. Functionally, this protein is part of the stalk that links CF(0) to CF(1). It either transmits conformational changes from CF(0) to CF(1) or is implicated in proton conduction. The protein is ATP synthase subunit delta of Burkholderia orbicola (strain MC0-3).